Consider the following 61-residue polypeptide: uncharacterized protein (61 aa).

Positions 36-61 (RLTDVPPQPNSPPDNVFNPDQPRMGP) are disordered.

This sequence belongs to the ART2/RRT15 family.

This is an uncharacterized protein from Saccharomyces cerevisiae (strain ATCC 204508 / S288c) (Baker's yeast).